We begin with the raw amino-acid sequence, 675 residues long: Protein brown (675 aa).

At 1–419 the chain is on the cytoplasmic side; the sequence is MQESGGSSGQ…TEDLRNIRSG (419 aa). Residues 34–261 enclose the ABC transporter domain; that stretch reads YSFWNECRKK…EVVAESHESL (228 aa). 66-73 contacts ATP; sequence GGSGAGKT. Positions 229 to 249 are disordered; it reads EDSFETPSGESSASGSGSKSI. The span at 236–248 shows a compositional bias: low complexity; that stretch reads SGESSASGSGSKS. Residues 420-440 traverse the membrane as a helical segment; the sequence is LIAFGFFMITAVTLSLMYSGI. Topologically, residues 441-460 are extracellular; sequence GGLTQRTVQDVGGSIFMLSN. The helical transmembrane segment at 461–481 threads the bilayer; it reads EMIFTFSYGVTYIFPAALPII. The Cytoplasmic portion of the chain corresponds to 482 to 497; it reads RREVGEGTYSLSAYYV. The chain crosses the membrane as a helical span at residues 498-518; it reads ALVLSFVPVAFFKGYVFLSVI. The Extracellular segment spans residues 519–531; the sequence is YASIYYTRGFLLY. Residues 532–552 form a helical membrane-spanning segment; it reads LSMGFLMSLSAVAAVGYGVFL. Over 553–568 the chain is Cytoplasmic; sequence SSLFESDKMASECAAP. A helical membrane pass occupies residues 569 to 589; sequence FDLIFLIFGGTYMNVDTVPGL. Topologically, residues 590–644 are extracellular; the sequence is KYLSLFFYSNEALMYKFWIDIDNIDCPVNEDHPCIKTGVEVLQQGSYRNADYTYW. The chain crosses the membrane as a helical span at residues 645–665; it reads LDCFSLVVVAVIFHIVSFGLV. The Cytoplasmic portion of the chain corresponds to 666–675; sequence RRYIHRSGYY.

The protein belongs to the ABC transporter superfamily. ABCG family. Eye pigment precursor importer (TC 3.A.1.204) subfamily. May form a heterodimer with w/white.

It localises to the membrane. It carries out the reaction guanine(out) + ATP + H2O = guanine(in) + ADP + phosphate + H(+). The enzyme catalyses riboflavin(in) + ATP + H2O = riboflavin(out) + ADP + phosphate + H(+). The catalysed reaction is (6S)-5,6,7,8-tetrahydrofolate(out) + ATP + H2O = (6S)-5,6,7,8-tetrahydrofolate(in) + ADP + phosphate + H(+). In terms of biological role, ATP-dependent transporter of the ATP-binding cassette (ABC) family which transports various molecules including bioamines, neurotransmitters and metabolic intermediates. In the eye and probably in association with w/white, required for the transport of the eye red pigment precursor, guanine, into pigment cell granules. In Malpighian tubules, involved in guanine uptake. Probably in association with w/white, involved in aging-induced intestinal stem cell proliferation in the midgut by regulating tetrahydrofolate transport. The polypeptide is Protein brown (Drosophila melanogaster (Fruit fly)).